The following is a 292-amino-acid chain: 4-hydroxy-tetrahydrodipicolinate synthase (292 aa).

Residue Thr45 participates in pyruvate binding. Tyr133 acts as the Proton donor/acceptor in catalysis. The Schiff-base intermediate with substrate role is filled by Lys161. Ile203 provides a ligand contact to pyruvate.

It belongs to the DapA family. As to quaternary structure, homotetramer; dimer of dimers.

The protein resides in the cytoplasm. It carries out the reaction L-aspartate 4-semialdehyde + pyruvate = (2S,4S)-4-hydroxy-2,3,4,5-tetrahydrodipicolinate + H2O + H(+). It participates in amino-acid biosynthesis; L-lysine biosynthesis via DAP pathway; (S)-tetrahydrodipicolinate from L-aspartate: step 3/4. In terms of biological role, catalyzes the condensation of (S)-aspartate-beta-semialdehyde [(S)-ASA] and pyruvate to 4-hydroxy-tetrahydrodipicolinate (HTPA). The polypeptide is 4-hydroxy-tetrahydrodipicolinate synthase (Vibrio vulnificus (strain YJ016)).